The chain runs to 91 residues: Glycophorin-B (91 aa).

Residues 1 to 19 form the signal peptide; that stretch reads MYGKIIFVLLLSEIVSISA. Residues 20 to 59 lie on the Extracellular side of the membrane; sequence LSTTEVAMHTSTSSSVTKSYISSQTNGETGQLVHRFTVPA. O-linked (GalNAc...) threonine glycosylation is present at threonine 36. O-linked (GalNAc...) serine glycosylation occurs at serine 38. The chain crosses the membrane as a helical span at residues 60–81; the sequence is PVVIILIILCVMAGIIGTILLI. Residues 82–91 are Cytoplasmic-facing; the sequence is SYSIRRLIKA.

It belongs to the glycophorin-A family. Component of the ankyrin-1 complex in the erythrocyte, composed of ANK1, RHCE, RHAG, SLC4A1, EPB42, GYPA, GYPB and AQP1. Interacts (via the N-terminal) with RHAG; this interaction bridges the (RHAG)2(RHCE) heterotrimer with the SLC4A1 Band 3 I dimer complexed with GYPA. Post-translationally, the N-terminal extracellular domain is heavily glycosylated on serine and threonine residues.

The protein resides in the cell membrane. In terms of biological role, component of the ankyrin-1 complex, a multiprotein complex involved in the stability and shape of the erythrocyte membrane. The polypeptide is Glycophorin-B (Homo sapiens (Human)).